Here is a 327-residue protein sequence, read N- to C-terminus: Melanoma-associated antigen B18 (327 aa).

A compositionally biased stretch (basic residues) spans 1–19 (MPRGQKSKLRAREKRRQAR). The interval 1–85 (MPRGQKSKLR…SSDDSEDTED (85 aa)) is disordered. The segment covering 46–70 (MPTSPNMPMGEQSTFSHSYTSTSDQ) has biased composition (polar residues). One can recognise an MAGE domain in the interval 91–289 (INHKVVLLVQ…DSFPTLYEAA (199 aa)).

Interacts with LNX1. Expressed in testis, stomach, large intestine, small intestine, spleen, lymph node, bone marrow lymphocytes and blood T-lymphocytes. Not detected in brain, heart, lung, liver or kidney (at protein level).

The protein resides in the cytoplasm. Its function is as follows. May enhance ubiquitin ligase activity of RING-type zinc finger-containing E3 ubiquitin-protein ligases. Proposed to act through recruitment and/or stabilization of the Ubl-conjugating enzyme (E2) at the E3:substrate complex. This chain is Melanoma-associated antigen B18, found in Mus musculus (Mouse).